A 725-amino-acid polypeptide reads, in one-letter code: D-(-)-3-hydroxybutyrate oligomer hydrolase (725 aa).

The signal sequence occupies residues 1–22 (MNTTRDANRLRQRASLSGLALA). Catalysis depends on Ser-322, which acts as the Charge relay system.

Belongs to the D-(-)-3-hydroxybutyrate oligomer hydrolase family.

It localises to the secreted. It carries out the reaction (3R)-hydroxybutanoate dimer + H2O = 2 (R)-3-hydroxybutanoate + H(+). The protein operates within lipid metabolism; butanoate metabolism. Functionally, participates in the degradation of poly-3-hydroxybutyrate (PHB). It works downstream of poly(3-hydroxybutyrate) depolymerase, hydrolyzing D(-)-3-hydroxybutyrate oligomers of various length (3HB-oligomers) into 3HB-monomers. This Ralstonia nicotianae (strain ATCC BAA-1114 / GMI1000) (Ralstonia solanacearum) protein is D-(-)-3-hydroxybutyrate oligomer hydrolase.